Here is a 499-residue protein sequence, read N- to C-terminus: Tektin-like protein 1 (499 aa).

Coiled coils occupy residues 197–227 and 297–317; these read SMLT…LKTL and LNEA…MAKN. Tyrosine 372 carries the phosphotyrosine modification.

Microtubule inner protein component of sperm flagellar doublet microtubules.

It is found in the cytoplasm. Its subcellular location is the cytoskeleton. The protein localises to the flagellum axoneme. In terms of biological role, microtubule inner protein (MIP) part of the dynein-decorated doublet microtubules (DMTs) in sperm flagellar axoneme, which is required for motile flagellum beating. Forms an extensive interaction network cross-linking the lumen of axonemal doublet microtubules. The polypeptide is Tektin-like protein 1 (Homo sapiens (Human)).